The following is a 197-amino-acid chain: Holliday junction branch migration complex subunit RuvA (197 aa).

The interval 1–64 is domain I; that stretch reads MIGRLRGIVA…EDSVSLYGFL (64 aa). The segment at 65 to 143 is domain II; that stretch reads REGERRLFRD…QFGAGGALPT (79 aa). Residues 144-153 form a flexible linker region; sequence GSGPAPADPL. Residues 153–197 form a domain III region; sequence LSDATVALQQLGYKPAEAARMARDAFNEGDEVATVIRKALQSALR.

It belongs to the RuvA family. As to quaternary structure, homotetramer. Forms an RuvA(8)-RuvB(12)-Holliday junction (HJ) complex. HJ DNA is sandwiched between 2 RuvA tetramers; dsDNA enters through RuvA and exits via RuvB. An RuvB hexamer assembles on each DNA strand where it exits the tetramer. Each RuvB hexamer is contacted by two RuvA subunits (via domain III) on 2 adjacent RuvB subunits; this complex drives branch migration. In the full resolvosome a probable DNA-RuvA(4)-RuvB(12)-RuvC(2) complex forms which resolves the HJ.

The protein resides in the cytoplasm. In terms of biological role, the RuvA-RuvB-RuvC complex processes Holliday junction (HJ) DNA during genetic recombination and DNA repair, while the RuvA-RuvB complex plays an important role in the rescue of blocked DNA replication forks via replication fork reversal (RFR). RuvA specifically binds to HJ cruciform DNA, conferring on it an open structure. The RuvB hexamer acts as an ATP-dependent pump, pulling dsDNA into and through the RuvAB complex. HJ branch migration allows RuvC to scan DNA until it finds its consensus sequence, where it cleaves and resolves the cruciform DNA. The protein is Holliday junction branch migration complex subunit RuvA of Stenotrophomonas maltophilia (strain K279a).